We begin with the raw amino-acid sequence, 425 residues long: Enolase (425 aa).

Gln-163 serves as a coordination point for (2R)-2-phosphoglycerate. Glu-205 serves as the catalytic Proton donor. 3 residues coordinate Mg(2+): Asp-242, Glu-285, and Asp-312. Residues Lys-337, Arg-366, Ser-367, and Lys-388 each contribute to the (2R)-2-phosphoglycerate site. Lys-337 (proton acceptor) is an active-site residue.

It belongs to the enolase family. Mg(2+) serves as cofactor.

Its subcellular location is the cytoplasm. It localises to the secreted. The protein resides in the cell surface. The catalysed reaction is (2R)-2-phosphoglycerate = phosphoenolpyruvate + H2O. Its pathway is carbohydrate degradation; glycolysis; pyruvate from D-glyceraldehyde 3-phosphate: step 4/5. Its function is as follows. Catalyzes the reversible conversion of 2-phosphoglycerate (2-PG) into phosphoenolpyruvate (PEP). It is essential for the degradation of carbohydrates via glycolysis. The sequence is that of Enolase from Rhodospirillum rubrum (strain ATCC 11170 / ATH 1.1.1 / DSM 467 / LMG 4362 / NCIMB 8255 / S1).